Consider the following 466-residue polypeptide: Arginine biosynthesis bifunctional protein ArgJ, mitochondrial (466 aa).

Residues threonine 194, lysine 223, threonine 234, glutamate 321, asparagine 461, and threonine 466 each coordinate substrate. Residue threonine 234 is the Nucleophile of the active site.

This sequence belongs to the ArgJ family. Heterodimer of an alpha and a beta chain. Post-translationally, the alpha and beta chains are autoproteolytically processed from a single precursor protein within the mitochondrion.

The protein localises to the mitochondrion matrix. The enzyme catalyses N(2)-acetyl-L-ornithine + L-glutamate = N-acetyl-L-glutamate + L-ornithine. It carries out the reaction L-glutamate + acetyl-CoA = N-acetyl-L-glutamate + CoA + H(+). Its pathway is amino-acid biosynthesis; L-arginine biosynthesis; L-ornithine and N-acetyl-L-glutamate from L-glutamate and N(2)-acetyl-L-ornithine (cyclic): step 1/1. It functions in the pathway amino-acid biosynthesis; L-arginine biosynthesis; N(2)-acetyl-L-ornithine from L-glutamate: step 1/4. In terms of biological role, catalyzes two activities which are involved in the cyclic version of arginine biosynthesis: the synthesis of acetylglutamate from glutamate and acetyl-CoA, and of ornithine by transacetylation between acetylornithine and glutamate. The polypeptide is Arginine biosynthesis bifunctional protein ArgJ, mitochondrial (Aspergillus fumigatus (strain ATCC MYA-4609 / CBS 101355 / FGSC A1100 / Af293) (Neosartorya fumigata)).